A 376-amino-acid polypeptide reads, in one-letter code: Protein-tyrosine sulfotransferase 2 (376 aa).

The Cytoplasmic segment spans residues 1-8; it reads MRLSVRKV. A helical; Signal-anchor for type II membrane protein transmembrane segment spans residues 9 to 25; that stretch reads LLAVGCALALVLAVQLG. Over 26–376 the chain is Lumenal; the sequence is QQVLECRAVL…NSTSPHLGSS (351 aa). A 3'-phosphoadenylyl sulfate-binding site is contributed by 77–81; the sequence is RSGTT. An intrachain disulfide couples cysteine 95 to cysteine 155. Glutamate 98 serves as the catalytic Proton donor/acceptor. Residues 100–104 are interaction with peptide substrate; that stretch reads RIIPR. 3'-phosphoadenylyl sulfate-binding residues include arginine 182, serine 190, and arginine 194. A disulfide bridge connects residues cysteine 224 and cysteine 232. 3'-phosphoadenylyl sulfate contacts are provided by residues tyrosine 237, 284 to 293, and lysine 299; that span reads STDQVIKPVN. Residues asparagine 342 and asparagine 367 are each glycosylated (N-linked (GlcNAc...) asparagine).

The protein belongs to the protein sulfotransferase family. In terms of assembly, homodimer. Can also form heterodimers with TPST1. N-glycosylated.

The protein localises to the golgi apparatus membrane. It catalyses the reaction L-tyrosyl-[protein] + 3'-phosphoadenylyl sulfate = O-sulfo-L-tyrosine-[protein] + adenosine 3',5'-bisphosphate + H(+). In terms of biological role, catalyzes the O-sulfation of tyrosine residues within acidic motifs of polypeptides, using 3'-phosphoadenylyl sulfate (PAPS) as cosubstrate. This chain is Protein-tyrosine sulfotransferase 2 (Tpst2), found in Rattus norvegicus (Rat).